Consider the following 509-residue polypeptide: MRKFSRYAFTSMATVTLLSSLTPAALASDTNHKPATSDINFEITQKSDAVKALKELPKSENVKNHYQDYSVTDVKTDKKGFTHYTLQPSVDGVHAPDKEVKVHADKSGKVVLINGDTDAKKVKPTNKVTLSKDEAADKAFNAVKIDKNKAKNLQDDVIKENKVEIDGDSNKYIYNIELITVTPEISHWKVKIDADTGAVVEKTNLVKEAAATGTGKGVLGDTKDININSIDGGFSLEDLTHQGKLSAYNFNDQTGQATLITNEDENFVKDDQRAGVDANYYAKQTYDYYKNTFGRESYDNHGSPIVSLTHVNHYGGQDNRNNAAWIGDKMIYGDGDGRTFTNLSGANDVVAHELTHGVTQETANLEYKDQSGALNESFSDVFGYFVDDEDFLMGEDVYTPGKEGDALRSMSNPEQFGQPSHMKDYVYTEKDNGGVHTNSGIPNKAAYNVIQAIGKSKSEQIYYRALTEYLTSNSNFKDCKDALYQAAKDLYDEQTAEQVYEAWNEVGVE.

A signal peptide spans 1–27 (MRKFSRYAFTSMATVTLLSSLTPAALA). A propeptide spanning residues 28–208 (SDTNHKPATS…VVEKTNLVKE (181 aa)) is cleaved from the precursor. Position 348 (Asp348) interacts with Ca(2+). His352 serves as a coordination point for Zn(2+). Glu353 is a catalytic residue. Residues His356 and Glu376 each contribute to the Zn(2+) site. Asp387, Glu389, Asp390, Leu392, Glu395, Tyr398, Thr399, Lys402, and Asp405 together coordinate Ca(2+). Catalysis depends on His436, which acts as the Proton donor.

The protein belongs to the peptidase M4 family. As to quaternary structure, monomer. The cofactor is Ca(2+). Zn(2+) serves as cofactor.

The enzyme catalyses Cleavage of insulin B chain with specificity similar to that of thermolysin, preferring hydrophobic P1' residues. Activates the glutamyl endopeptidase (EC 3.4.21.19) of Staphylococcus aureus.. Plays an essential role in immune evasion by helping bacteria to resist complement-mediated killing by neutrophils. Inhibits the deposition of host C3b on bacterial surfaces and the release of the chemoattractant C5a by cleaving the central complement protein C3. The cleavage site renders the C3b molecule vulnerable to proteolytic degradation by host regulators. Cleaves and inactivates host SERPINA1, which is an endogenous protease inhibitor essential for controlling neutrophil serine protease elastase. Also plays an essential role in the cleavage and subsequent activation of the serine protease SspA (glutamyl endopeptidase) which is involved in colonization and infection of human tissues. The polypeptide is Zinc metalloproteinase aureolysin (Staphylococcus aureus).